A 110-amino-acid chain; its full sequence is Suppressor of silencing 2b (110 aa).

The tract at residues 16-45 (ARMVEAKKQRRRSHKQNRRERGHKSPSERA) is disordered. The Nuclear localization signal motif lies at 22–27 (KKQRRR). Residues 23-37 (KQRRRSHKQNRRERG) are compositionally biased toward basic residues.

The protein belongs to the cucumovirus/ilarvirus protein 2b family. Homotetramer. Interacts with host AGO1; this interaction blocks AGO1 cleavage activity to attenuate RNA silencing and thus counter host defense. Interacts with host JAZ.

The protein localises to the host nucleus. Multifunctional protein that plays two independent roles: viral suppressor of host RNAi (VSR) and viral inducer of host attractiveness to insect vectors (VIA). Acts as a suppressor of RNA-mediated gene silencing, also known as post-transcriptional gene silencing (PTGS), a mechanism of plant viral defense that limits the accumulation of viral RNAs. May directly interfere with mobile silencing signaling. Also inhibits signal transduction by the phytohormone jasmonate, making the infected plant more attractive to aphids, which are the second host to play a role as a dissemination vector. Acts by binding to and inhibiting JAZ degradation in the host. The polypeptide is Suppressor of silencing 2b (Cucurbita pepo (Vegetable marrow)).